We begin with the raw amino-acid sequence, 408 residues long: Guanine nucleotide-binding protein alpha-14 subunit (408 aa).

Residues 39–46 (HSEELEAK), 79–86 (GGPLSGKS), 201–205 (TRIAD), 216–222 (VHSRKAT), 241–245 (DVGGQ), 285–288 (FPKF), 325–328 (NKVD), and Ala-380 contribute to the GTP site. Residues 71-408 (SHIKILILGG…KANAKATGLS (338 aa)) form the G-alpha domain. The interval 74–87 (KILILGGPLSGKST) is G1 motif. Ser-86 is a Mg(2+) binding site. The interval 214–222 (DIVHSRKAT) is G2 motif. Thr-222 is a binding site for Mg(2+). Residues 237-246 (LLMIDVGGQR) are G3 motif. A G4 motif region spans residues 321–328 (LLFFNKVD). A G5 motif region spans residues 378–383 (TTATNT).

This sequence belongs to the G-alpha family. In terms of assembly, g proteins are composed of 3 units; alpha, beta and gamma. The alpha chain contains the guanine nucleotide binding site. Interacts with the dopamine receptor dop-2 (via C-terminus); the interaction is direct.

Guanine nucleotide-binding proteins (G proteins) are involved as modulators or transducers in various transmembrane signaling systems. In association with the G-protein coupled dopamine receptor dop-2, modulates two types of learning: touch habituation and chemosensory associative conditioning. The polypeptide is Guanine nucleotide-binding protein alpha-14 subunit (Caenorhabditis elegans).